A 443-amino-acid chain; its full sequence is Differentially expressed in FDCP 8 homolog B (443 aa).

A disordered region spans residues 14–49 (HLNPFDKKGGAERHPADSETQPCKDSSTSSPLSVPE). Positions 17 to 30 (PFDKKGGAERHPAD) are enriched in basic and acidic residues. A compositionally biased stretch (polar residues) spans 31 to 45 (SETQPCKDSSTSSPL). 2 Phorbol-ester/DAG-type zinc fingers span residues 134 to 185 (EHRF…TKPC) and 364 to 424 (IHTT…STSC).

The protein belongs to the DEF8 family.

Its function is as follows. Positively regulates lysosome peripheral distribution and ruffled border formation in osteoclasts. Involved in bone resorption. The sequence is that of Differentially expressed in FDCP 8 homolog B (def8-b) from Xenopus laevis (African clawed frog).